The chain runs to 104 residues: MRFLKALPRRAEVQYDCLDRTLETQENVNLNIRVNVKEVATWGVNTCIISLKGLDNADDRFVLPEVNTALALFPLSIAADCLLMLPCISVVMSISSVMKSVTVE.

Residues C81 to V97 traverse the membrane as a helical segment.

The protein localises to the cell membrane. This is an uncharacterized protein from Bacillus subtilis (strain 168).